The sequence spans 386 residues: NADH-ubiquinone oxidoreductase 49 kDa subunit homolog (386 aa).

The protein belongs to the complex I 49 kDa subunit family.

The protein resides in the mitochondrion. It catalyses the reaction a ubiquinone + NADH + 5 H(+)(in) = a ubiquinol + NAD(+) + 4 H(+)(out). Core subunit of the mitochondrial membrane respiratory chain NADH dehydrogenase (Complex I) that is believed to belong to the minimal assembly required for catalysis. Complex I functions in the transfer of electrons from NADH to the respiratory chain. The immediate electron acceptor for the enzyme is believed to be ubiquinone. Component of the iron-sulfur (IP) fragment of the enzyme. Component of the iron-sulfur (IP) fragment of the enzyme. The chain is NADH-ubiquinone oxidoreductase 49 kDa subunit homolog (NAD7) from Trypanosoma brucei brucei.